Reading from the N-terminus, the 339-residue chain is Putative ABC transporter ATP-binding protein MG467 homolog (339 aa).

A disordered region spans residues 41 to 87; that stretch reads KKTKKAKPAKVKKVKEPKAKAVKPEQVKPTKTTKAPKPKKPKKQGGL. The span at 42–53 shows a compositional bias: basic residues; sequence KTKKAKPAKVKK. Basic and acidic residues predominate over residues 54 to 68; it reads VKEPKAKAVKPEQVK. Residues 74-83 are compositionally biased toward basic residues; sequence KAPKPKKPKK. The ABC transporter domain occupies 112 to 338; it reads ISIDKMWKHV…IVSNELVRPL (227 aa). 150-157 is an ATP binding site; the sequence is GPSGSGKT.

Belongs to the ABC transporter superfamily.

This chain is Putative ABC transporter ATP-binding protein MG467 homolog, found in Mycoplasma pneumoniae (strain ATCC 29342 / M129 / Subtype 1) (Mycoplasmoides pneumoniae).